We begin with the raw amino-acid sequence, 448 residues long: Tubulin alpha-5 chain (448 aa).

The short motif at 1–4 is the MREC motif element; sequence MREC. Glutamine 11 contributes to the GTP binding site. Position 40 is an N6-acetyllysine (lysine 40). 7 residues coordinate GTP: glutamate 71, serine 140, glycine 144, threonine 145, threonine 179, asparagine 206, and asparagine 228. Residue glutamate 71 participates in Mg(2+) binding. Glutamate 254 is an active-site residue.

It belongs to the tubulin family. Dimer of alpha and beta chains. A typical microtubule is a hollow water-filled tube with an outer diameter of 25 nm and an inner diameter of 15 nM. Alpha-beta heterodimers associate head-to-tail to form protofilaments running lengthwise along the microtubule wall with the beta-tubulin subunit facing the microtubule plus end conferring a structural polarity. Microtubules usually have 13 protofilaments but different protofilament numbers can be found in some organisms and specialized cells. It depends on Mg(2+) as a cofactor. Post-translationally, some glutamate residues at the C-terminus are polyglycylated, resulting in polyglycine chains on the gamma-carboxyl group. Glycylation is mainly limited to tubulin incorporated into axonemes (cilia and flagella) whereas glutamylation is prevalent in neuronal cells, centrioles, axonemes, and the mitotic spindle. Both modifications can coexist on the same protein on adjacent residues, and lowering polyglycylation levels increases polyglutamylation, and reciprocally. The precise function of polyglycylation is still unclear. In terms of processing, some glutamate residues at the C-terminus are polyglutamylated, resulting in polyglutamate chains on the gamma-carboxyl group. Polyglutamylation plays a key role in microtubule severing by spastin (SPAST). SPAST preferentially recognizes and acts on microtubules decorated with short polyglutamate tails: severing activity by SPAST increases as the number of glutamates per tubulin rises from one to eight, but decreases beyond this glutamylation threshold. Acetylation of alpha chains at Lys-40 is located inside the microtubule lumen. This modification has been correlated with increased microtubule stability, intracellular transport and ciliary assembly.

It is found in the cytoplasm. The protein resides in the cytoskeleton. The enzyme catalyses GTP + H2O = GDP + phosphate + H(+). Its function is as follows. Tubulin is the major constituent of microtubules, a cylinder consisting of laterally associated linear protofilaments composed of alpha- and beta-tubulin heterodimers. Microtubules grow by the addition of GTP-tubulin dimers to the microtubule end, where a stabilizing cap forms. Below the cap, tubulin dimers are in GDP-bound state, owing to GTPase activity of alpha-tubulin. In Gallus gallus (Chicken), this protein is Tubulin alpha-5 chain.